Reading from the N-terminus, the 154-residue chain is 17 kDa surface antigen (154 aa).

Positions Met1–Ala19 are cleaved as a signal peptide. Cys20 is lipidated: N-palmitoyl cysteine. Cys20 is lipidated: S-diacylglycerol cysteine.

Belongs to the rickettsiale 17 kDa surface antigen family.

Its subcellular location is the cell outer membrane. The chain is 17 kDa surface antigen (omp) from Rickettsia parkeri.